A 425-amino-acid polypeptide reads, in one-letter code: Putative E3 ubiquitin-protein ligase UBR7 (425 aa).

The UBR-type zinc-finger motif lies at 44–116 (EKCSYSQGSV…KNLECKLLPD (73 aa)). A PHD-type; atypical zinc finger spans residues 132 to 188 (GLYCICKRPYPDPEDEIPDEMIQCVVCEDWFHGRHLGAIPPESGDFQEMVCQACMKR). Glycyl lysine isopeptide (Lys-Gly) (interchain with G-Cter in SUMO2) cross-links involve residues Lys-225 and Lys-252. Residues 225 to 246 (KPENGEHQDSTLKEDVPEQGKD) are disordered. Ser-264 carries the phosphoserine modification. Lys-274 is covalently cross-linked (Glycyl lysine isopeptide (Lys-Gly) (interchain with G-Cter in SUMO2)). Phosphoserine is present on Ser-354. Lys-398 participates in a covalent cross-link: Glycyl lysine isopeptide (Lys-Gly) (interchain with G-Cter in SUMO2).

In terms of tissue distribution, expressed in sperm (at protein level).

The enzyme catalyses S-ubiquitinyl-[E2 ubiquitin-conjugating enzyme]-L-cysteine + [acceptor protein]-L-lysine = [E2 ubiquitin-conjugating enzyme]-L-cysteine + N(6)-ubiquitinyl-[acceptor protein]-L-lysine.. It functions in the pathway protein modification; protein ubiquitination. E3 ubiquitin-protein ligase which is a component of the N-end rule pathway. Recognizes and binds to proteins bearing specific N-terminal residues that are destabilizing according to the N-end rule, leading to their ubiquitination and subsequent degradation. The protein is Putative E3 ubiquitin-protein ligase UBR7 (UBR7) of Homo sapiens (Human).